The following is a 454-amino-acid chain: Pup--protein ligase (454 aa).

Glutamate 9 contacts Mg(2+). Arginine 53 is a binding site for ATP. Tyrosine 55 serves as a coordination point for Mg(2+). Aspartate 57 acts as the Proton acceptor in catalysis. Glutamate 63 is a binding site for Mg(2+). 2 residues coordinate ATP: threonine 66 and tryptophan 421.

Belongs to the Pup ligase/Pup deamidase family. Pup-conjugating enzyme subfamily.

The catalysed reaction is ATP + [prokaryotic ubiquitin-like protein]-L-glutamate + [protein]-L-lysine = ADP + phosphate + N(6)-([prokaryotic ubiquitin-like protein]-gamma-L-glutamyl)-[protein]-L-lysine.. The protein operates within protein degradation; proteasomal Pup-dependent pathway. It functions in the pathway protein modification; protein pupylation. Its function is as follows. Catalyzes the covalent attachment of the prokaryotic ubiquitin-like protein modifier Pup to the proteasomal substrate proteins, thereby targeting them for proteasomal degradation. This tagging system is termed pupylation. The ligation reaction involves the side-chain carboxylate of the C-terminal glutamate of Pup and the side-chain amino group of a substrate lysine. This is Pup--protein ligase from Frankia casuarinae (strain DSM 45818 / CECT 9043 / HFP020203 / CcI3).